The chain runs to 313 residues: Acetyl-coenzyme A carboxylase carboxyl transferase subunit alpha (313 aa).

Residues 34–288 (KLKDQRDIAL…KNVVLEAVNE (255 aa)) form the CoA carboxyltransferase C-terminal domain.

This sequence belongs to the AccA family. In terms of assembly, acetyl-CoA carboxylase is a heterohexamer composed of biotin carboxyl carrier protein (AccB), biotin carboxylase (AccC) and two subunits each of ACCase subunit alpha (AccA) and ACCase subunit beta (AccD).

The protein resides in the cytoplasm. It catalyses the reaction N(6)-carboxybiotinyl-L-lysyl-[protein] + acetyl-CoA = N(6)-biotinyl-L-lysyl-[protein] + malonyl-CoA. It functions in the pathway lipid metabolism; malonyl-CoA biosynthesis; malonyl-CoA from acetyl-CoA: step 1/1. Functionally, component of the acetyl coenzyme A carboxylase (ACC) complex. First, biotin carboxylase catalyzes the carboxylation of biotin on its carrier protein (BCCP) and then the CO(2) group is transferred by the carboxyltransferase to acetyl-CoA to form malonyl-CoA. This Fusobacterium nucleatum subsp. nucleatum (strain ATCC 25586 / DSM 15643 / BCRC 10681 / CIP 101130 / JCM 8532 / KCTC 2640 / LMG 13131 / VPI 4355) protein is Acetyl-coenzyme A carboxylase carboxyl transferase subunit alpha.